The sequence spans 213 residues: Imidazole glycerol phosphate synthase subunit HisH (213 aa).

One can recognise a Glutamine amidotransferase type-1 domain in the interval 3 to 213 (MIGVIDYGMG…VGIVTGRENG (211 aa)). The active-site Nucleophile is cysteine 81. Catalysis depends on residues histidine 188 and glutamate 190.

Heterodimer of HisH and HisF.

It localises to the cytoplasm. It catalyses the reaction 5-[(5-phospho-1-deoxy-D-ribulos-1-ylimino)methylamino]-1-(5-phospho-beta-D-ribosyl)imidazole-4-carboxamide + L-glutamine = D-erythro-1-(imidazol-4-yl)glycerol 3-phosphate + 5-amino-1-(5-phospho-beta-D-ribosyl)imidazole-4-carboxamide + L-glutamate + H(+). It carries out the reaction L-glutamine + H2O = L-glutamate + NH4(+). Its pathway is amino-acid biosynthesis; L-histidine biosynthesis; L-histidine from 5-phospho-alpha-D-ribose 1-diphosphate: step 5/9. In terms of biological role, IGPS catalyzes the conversion of PRFAR and glutamine to IGP, AICAR and glutamate. The HisH subunit catalyzes the hydrolysis of glutamine to glutamate and ammonia as part of the synthesis of IGP and AICAR. The resulting ammonia molecule is channeled to the active site of HisF. This is Imidazole glycerol phosphate synthase subunit HisH from Geobacillus thermodenitrificans (strain NG80-2).